We begin with the raw amino-acid sequence, 553 residues long: uncharacterized protein (553 aa).

The next 2 membrane-spanning stretches (helical) occupy residues 6 to 26 (IKIF…QVDA) and 524 to 544 (SYWI…GYVF).

It to M.jannaschii MJ0795 and MJ1506.

Its subcellular location is the cell membrane. This is an uncharacterized protein from Methanocaldococcus jannaschii (strain ATCC 43067 / DSM 2661 / JAL-1 / JCM 10045 / NBRC 100440) (Methanococcus jannaschii).